Consider the following 406-residue polypeptide: Probable tRNA sulfurtransferase (406 aa).

Residues 60-166 (EPVMERLKQV…LNGIYLTSAK (107 aa)) enclose the THUMP domain. Residues 184–185 (ML), 209–210 (HF), R266, G288, and Q297 contribute to the ATP site.

Belongs to the ThiI family.

Its subcellular location is the cytoplasm. The enzyme catalyses [ThiI sulfur-carrier protein]-S-sulfanyl-L-cysteine + a uridine in tRNA + 2 reduced [2Fe-2S]-[ferredoxin] + ATP + H(+) = [ThiI sulfur-carrier protein]-L-cysteine + a 4-thiouridine in tRNA + 2 oxidized [2Fe-2S]-[ferredoxin] + AMP + diphosphate. It catalyses the reaction [ThiS sulfur-carrier protein]-C-terminal Gly-Gly-AMP + S-sulfanyl-L-cysteinyl-[cysteine desulfurase] + AH2 = [ThiS sulfur-carrier protein]-C-terminal-Gly-aminoethanethioate + L-cysteinyl-[cysteine desulfurase] + A + AMP + 2 H(+). The protein operates within cofactor biosynthesis; thiamine diphosphate biosynthesis. In terms of biological role, catalyzes the ATP-dependent transfer of a sulfur to tRNA to produce 4-thiouridine in position 8 of tRNAs, which functions as a near-UV photosensor. Also catalyzes the transfer of sulfur to the sulfur carrier protein ThiS, forming ThiS-thiocarboxylate. This is a step in the synthesis of thiazole, in the thiamine biosynthesis pathway. The sulfur is donated as persulfide by IscS. The sequence is that of Probable tRNA sulfurtransferase from Limosilactobacillus fermentum (strain NBRC 3956 / LMG 18251) (Lactobacillus fermentum).